The sequence spans 459 residues: RuvB-like helicase 1 (459 aa).

75–82 (GGPSTGKT) lines the ATP pocket.

Belongs to the RuvB family. May form heterododecamers with RVB2. Component of the SWR1 chromatin remodeling complex, the INO80 chromatin remodeling complex, and of the R2TP complex.

The protein resides in the nucleus. It catalyses the reaction ATP + H2O = ADP + phosphate + H(+). DNA helicase which participates in several chromatin remodeling complexes, including the SWR1 and the INO80 complexes. The SWR1 complex mediates the ATP-dependent exchange of histone H2A for the H2A variant HZT1 leading to transcriptional regulation of selected genes by chromatin remodeling. The INO80 complex remodels chromatin by shifting nucleosomes and is involved in DNA repair. Also involved in pre-rRNA processing. The sequence is that of RuvB-like helicase 1 (RVB1) from Eremothecium gossypii (strain ATCC 10895 / CBS 109.51 / FGSC 9923 / NRRL Y-1056) (Yeast).